A 326-amino-acid polypeptide reads, in one-letter code: Putative UPF0725 protein At1g28500 (326 aa).

Residues 301–320 (KDTEQRSKTRQSEEKVESSQ) are compositionally biased toward basic and acidic residues. The segment at 301 to 326 (KDTEQRSKTRQSEEKVESSQKRSRLC) is disordered.

This sequence belongs to the UPF0725 (EMB2204) family.

The sequence is that of Putative UPF0725 protein At1g28500 from Arabidopsis thaliana (Mouse-ear cress).